A 152-amino-acid polypeptide reads, in one-letter code: Ribosome maturation factor RimP (152 aa).

This sequence belongs to the RimP family.

It localises to the cytoplasm. In terms of biological role, required for maturation of 30S ribosomal subunits. This chain is Ribosome maturation factor RimP, found in Stutzerimonas stutzeri (strain A1501) (Pseudomonas stutzeri).